The primary structure comprises 523 residues: Lysine--tRNA ligase (523 aa).

The short motif at 30–38 (PSGYVHVGN) is the 'HIGH' region element. 8 residues coordinate Zn(2+): aspartate 95, cysteine 99, histidine 100, histidine 106, cysteine 177, histidine 180, cysteine 199, and histidine 203. The 'KMSKS' region motif lies at 279-283 (KMSGS).

Belongs to the class-I aminoacyl-tRNA synthetase family. It depends on Zn(2+) as a cofactor.

The protein localises to the cytoplasm. It carries out the reaction tRNA(Lys) + L-lysine + ATP = L-lysyl-tRNA(Lys) + AMP + diphosphate. In Pyrococcus horikoshii (strain ATCC 700860 / DSM 12428 / JCM 9974 / NBRC 100139 / OT-3), this protein is Lysine--tRNA ligase (lysS).